A 267-amino-acid chain; its full sequence is Imidazole glycerol phosphate synthase subunit HisF (267 aa).

Residues Asp22 and Asp141 contribute to the active site.

It belongs to the HisA/HisF family. As to quaternary structure, heterodimer of HisH and HisF.

The protein resides in the cytoplasm. The enzyme catalyses 5-[(5-phospho-1-deoxy-D-ribulos-1-ylimino)methylamino]-1-(5-phospho-beta-D-ribosyl)imidazole-4-carboxamide + L-glutamine = D-erythro-1-(imidazol-4-yl)glycerol 3-phosphate + 5-amino-1-(5-phospho-beta-D-ribosyl)imidazole-4-carboxamide + L-glutamate + H(+). It participates in amino-acid biosynthesis; L-histidine biosynthesis; L-histidine from 5-phospho-alpha-D-ribose 1-diphosphate: step 5/9. In terms of biological role, IGPS catalyzes the conversion of PRFAR and glutamine to IGP, AICAR and glutamate. The HisF subunit catalyzes the cyclization activity that produces IGP and AICAR from PRFAR using the ammonia provided by the HisH subunit. This chain is Imidazole glycerol phosphate synthase subunit HisF, found in Mycobacterium tuberculosis (strain ATCC 25177 / H37Ra).